A 234-amino-acid polypeptide reads, in one-letter code: Ubiquinone biosynthesis O-methyltransferase (234 aa).

Residues Arg36, Gly56, Asp77, and Met125 each coordinate S-adenosyl-L-methionine.

The protein belongs to the methyltransferase superfamily. UbiG/COQ3 family.

It carries out the reaction a 3-demethylubiquinol + S-adenosyl-L-methionine = a ubiquinol + S-adenosyl-L-homocysteine + H(+). The catalysed reaction is a 3-(all-trans-polyprenyl)benzene-1,2-diol + S-adenosyl-L-methionine = a 2-methoxy-6-(all-trans-polyprenyl)phenol + S-adenosyl-L-homocysteine + H(+). It functions in the pathway cofactor biosynthesis; ubiquinone biosynthesis. Its function is as follows. O-methyltransferase that catalyzes the 2 O-methylation steps in the ubiquinone biosynthetic pathway. This Actinobacillus pleuropneumoniae serotype 7 (strain AP76) protein is Ubiquinone biosynthesis O-methyltransferase.